Consider the following 282-residue polypeptide: 4-hydroxy-tetrahydrodipicolinate reductase (282 aa).

NAD(+) contacts are provided by residues 14-19 (GAMGRM) and 115-117 (GTT). H171 acts as the Proton donor/acceptor in catalysis. A (S)-2,3,4,5-tetrahydrodipicolinate-binding site is contributed by H172. K175 (proton donor) is an active-site residue. 181 to 182 (GT) is a binding site for (S)-2,3,4,5-tetrahydrodipicolinate.

Belongs to the DapB family.

It localises to the cytoplasm. It catalyses the reaction (S)-2,3,4,5-tetrahydrodipicolinate + NAD(+) + H2O = (2S,4S)-4-hydroxy-2,3,4,5-tetrahydrodipicolinate + NADH + H(+). It carries out the reaction (S)-2,3,4,5-tetrahydrodipicolinate + NADP(+) + H2O = (2S,4S)-4-hydroxy-2,3,4,5-tetrahydrodipicolinate + NADPH + H(+). Its pathway is amino-acid biosynthesis; L-lysine biosynthesis via DAP pathway; (S)-tetrahydrodipicolinate from L-aspartate: step 4/4. Catalyzes the conversion of 4-hydroxy-tetrahydrodipicolinate (HTPA) to tetrahydrodipicolinate. The chain is 4-hydroxy-tetrahydrodipicolinate reductase from Prochlorococcus marinus (strain NATL2A).